Reading from the N-terminus, the 135-residue chain is uncharacterized protein (135 aa).

A run of 3 helical transmembrane segments spans residues 12–32 (IPILLLVLYIALGVFIQYNGI), 68–88 (SMIGGMPGYLPLYAYLCAKFC), and 98–118 (GILYFSVVLFIMTSVIWFYLF).

Its subcellular location is the cell membrane. This is an uncharacterized protein from Methanocaldococcus jannaschii (strain ATCC 43067 / DSM 2661 / JAL-1 / JCM 10045 / NBRC 100440) (Methanococcus jannaschii).